The following is a 498-amino-acid chain: ATP synthase subunit beta, chloroplastic (498 aa).

172–179 (GGAGVGKT) is a binding site for ATP.

The protein belongs to the ATPase alpha/beta chains family. As to quaternary structure, F-type ATPases have 2 components, CF(1) - the catalytic core - and CF(0) - the membrane proton channel. CF(1) has five subunits: alpha(3), beta(3), gamma(1), delta(1), epsilon(1). CF(0) has four main subunits: a(1), b(1), b'(1) and c(9-12).

The protein localises to the plastid. The protein resides in the chloroplast thylakoid membrane. The enzyme catalyses ATP + H2O + 4 H(+)(in) = ADP + phosphate + 5 H(+)(out). Functionally, produces ATP from ADP in the presence of a proton gradient across the membrane. The catalytic sites are hosted primarily by the beta subunits. The polypeptide is ATP synthase subunit beta, chloroplastic (Illicium oligandrum (Star anise)).